A 379-amino-acid chain; its full sequence is ATP phosphoribosyltransferase regulatory subunit (379 aa).

This sequence belongs to the class-II aminoacyl-tRNA synthetase family. HisZ subfamily. In terms of assembly, heteromultimer composed of HisG and HisZ subunits.

It is found in the cytoplasm. It participates in amino-acid biosynthesis; L-histidine biosynthesis; L-histidine from 5-phospho-alpha-D-ribose 1-diphosphate: step 1/9. In terms of biological role, required for the first step of histidine biosynthesis. May allow the feedback regulation of ATP phosphoribosyltransferase activity by histidine. The polypeptide is ATP phosphoribosyltransferase regulatory subunit (Caldanaerobacter subterraneus subsp. tengcongensis (strain DSM 15242 / JCM 11007 / NBRC 100824 / MB4) (Thermoanaerobacter tengcongensis)).